Reading from the N-terminus, the 234-residue chain is Triosephosphate isomerase (234 aa).

8–10 (NFK) is a substrate binding site. Catalysis depends on H90, which acts as the Electrophile. Residue E159 is the Proton acceptor of the active site. Substrate contacts are provided by residues G165, S197, and 218–219 (GS).

In terms of assembly, homodimer.

The protein resides in the cytoplasm. The enzyme catalyses D-glyceraldehyde 3-phosphate = dihydroxyacetone phosphate. Its pathway is carbohydrate biosynthesis; gluconeogenesis. It participates in carbohydrate degradation; glycolysis; D-glyceraldehyde 3-phosphate from glycerone phosphate: step 1/1. Functionally, involved in the gluconeogenesis. Catalyzes stereospecifically the conversion of dihydroxyacetone phosphate (DHAP) to D-glyceraldehyde-3-phosphate (G3P). The protein is Triosephosphate isomerase of Helicobacter pylori (strain ATCC 700392 / 26695) (Campylobacter pylori).